Here is a 1839-residue protein sequence, read N- to C-terminus: Mannuronan C5-epimerase AlgE3 (1839 aa).

8 PbH1 repeats span residues 133 to 155 (DRDVTLERVEIREMSGYGFDPHE), 157 to 179 (TINLTIRDSVAHDNGLDGFVADY), 180 to 202 (QVGGVFENNVSYNNDRHGFNIVT), 204 to 226 (TNDFVLSNNVAYGNGGAGLVVQR), 257 to 279 (THDVTLQNAEIYGNGLYGVRVYG), 280 to 302 (AQDVQLLDNQIHDNSQNGAYAEV), 320 to 342 (TTGTWLEGNVISGSANSTFGIQE), and 347 to 369 (TDYSSLYANTIDGVQNGTVRLYG). The span at 372–386 (STVSEQPSSGQQATL) shows a compositional bias: polar residues. Residues 372-392 (STVSEQPSSGQQATLEGTAGN) form a disordered region. Hemolysin-type calcium-binding repeat units lie at residues 387–399 (EGTAGNDVLSGTG), 406–422 (GLAGNDRLDGGAGDDTL), 424–440 (GGAGRDTLTGGAGADTF), 538–550 (TGTEGNDNLSGTD), 557–573 (GYGGNDTLNGGAGNDIL), 574–591 (VGGAGRDTLTGGAGADVF), 695–709 (EGTDGNDSLQGTGAD), 714–730 (GLGGRDSLNGGAGDDVL), and 732–748 (GGAERDTLTGGTGADTF). PbH1 repeat units follow at residues 975–997 (DRNVTLERVEIREMSGYGFDPHE), 999–1021 (TINLTIRDSVAHDNGLDGFVADY), 1022–1044 (LVDSVFENNVAYNNDRHGFNVVT), 1046–1068 (TYDFTLSNNVAYGNGGAGLVIQR), 1099–1121 (TNNITLQNAEIYGNGYSGVRLYG), 1122–1143 (TEDVQILNNQIHDNAQNVAYAE), 1161–1183 (TTGTWIEGNVISGSANSTYGIEE), and 1188–1210 (TDYSSLYANTIDGVQTGAVRLNG). A compositionally biased stretch (polar residues) spans 1215–1236 (VSDQPGTGQQATLEGTTGNDTL). Residues 1215–1238 (VSDQPGTGQQATLEGTTGNDTLGG) form a disordered region. Hemolysin-type calcium-binding repeat units follow at residues 1229–1243 (GTTGNDTLGGSDAHE), 1247–1263 (GLDGDDRLDGGAGNDIL), 1265–1281 (GGVGRDTLTGGAGADTF), 1398–1414 (GHAGNDTLDGAGGDDIL), 1415–1432 (VGGAGSDSLTGGAGADVF), 1536–1552 (EGTAGNDSLQGTAADEV), 1554–1571 (HGGSGRDTLAGGAGADVF), 1670–1681 (GGDGNDTLSGGS), 1688–1704 (GGAGNDSLSGGAGNDIL), and 1706–1722 (GGAGRDTLSGGSGSDIF).

This sequence belongs to the D-mannuronate C5-epimerase family. The cofactor is Ca(2+).

It localises to the secreted. The enzyme catalyses [(1-&gt;4)-beta-D-mannuronosyl](n) = [alginate](n). The protein operates within glycan biosynthesis; alginate biosynthesis. With respect to regulation, inhibited by zinc. Converts beta-D-mannuronic acid (M) to alpha-L-guluronic acid (G), producing a polymer with gel-forming capacity, required for the formation of the cyst coat. The polypeptide is Mannuronan C5-epimerase AlgE3 (Azotobacter vinelandii).